We begin with the raw amino-acid sequence, 149 residues long: Arginine repressor (149 aa).

It belongs to the ArgR family.

It localises to the cytoplasm. It functions in the pathway amino-acid biosynthesis; L-arginine biosynthesis [regulation]. In terms of biological role, regulates arginine biosynthesis genes. In Bacillus cereus (strain ATCC 10987 / NRS 248), this protein is Arginine repressor.